We begin with the raw amino-acid sequence, 227 residues long: Endo-1,4-beta-xylanase 2 (227 aa).

An N-terminal signal peptide occupies residues 1–36 (MVSIKSVLAAATAVSSALAAPFDFVPRDNSTALQAR). Asn29 carries N-linked (GlcNAc...) asparagine glycosylation. The GH11 domain maps to 37–225 (QVTPNAEGWH…SSGESDIYVQ (189 aa)). The Nucleophile role is filled by Glu121. The Proton donor role is filled by Glu212.

This sequence belongs to the glycosyl hydrolase 11 (cellulase G) family.

It localises to the secreted. The catalysed reaction is Endohydrolysis of (1-&gt;4)-beta-D-xylosidic linkages in xylans.. It functions in the pathway glycan degradation; xylan degradation. In terms of biological role, endo-1,4-beta-xylanase involved in the hydrolysis of xylan, a major structural heterogeneous polysaccharide found in plant biomass representing the second most abundant polysaccharide in the biosphere, after cellulose. This is Endo-1,4-beta-xylanase 2 (xyn2) from Humicola insolens (Soft-rot fungus).